A 414-amino-acid chain; its full sequence is Bystin (414 aa).

Positions 1 to 11 (MSAKRNTKLRH) are enriched in basic residues. The segment at 1–91 (MSAKRNTKLR…PSDDEGQADD (91 aa)) is disordered. The span at 12–24 (APLEHAYVDDKSV) shows a compositional bias: basic and acidic residues. Residues 25 to 34 (RRNKRSKQRG) show a composition bias toward basic residues.

It belongs to the bystin family.

The protein resides in the nucleus. Its subcellular location is the nucleolus. Its function is as follows. Required for processing of 20S pre-rRNA precursor and biogenesis of 40S ribosomal subunits. The chain is Bystin (bysl) from Monosiga brevicollis (Choanoflagellate).